We begin with the raw amino-acid sequence, 2863 residues long: Lipopolysaccharide-responsive and beige-like anchor protein (2863 aa).

Disordered regions lie at residues 1–35 (MASEDNRVPSPPPTGDDGGGGGREETPTEGGALSL), 969–1005 (VGSQQPDTKDSPVCPHFTTNGNENSSIEKTSSLESAS), and 1018–1039 (EMKAEQENQELPDEGTLEETLT). Residue alanine 2 is modified to N-acetylalanine. 3 positions are modified to phosphoserine: serine 10, serine 979, and serine 1003. Residues 985-1005 (FTTNGNENSSIEKTSSLESAS) show a composition bias toward polar residues. Residues 1006–1053 (NIELQTTNTSYEEMKAEQENQELPDEGTLEETLTNETRNADDLEVSSD) adopt a coiled-coil conformation. Residues 1024 to 1034 (ENQELPDEGTL) show a composition bias toward acidic residues. 3 positions are modified to phosphoserine: serine 1100, serine 1135, and serine 1139. The span at 1161-1176 (PVTEKQTDTETQDSKD) shows a compositional bias: basic and acidic residues. The disordered stretch occupies residues 1161 to 1193 (PVTEKQTDTETQDSKDSGIQTMTASGSSAMSPE). The segment covering 1177–1193 (SGIQTMTASGSSAMSPE) has biased composition (polar residues). Phosphoserine occurs at positions 1233, 1247, and 1261. A WD 1 repeat occupies 1301 to 1343 (STVFRIPEFNWSQMHQRLLTDLLFSIETDIQMWRSHSTKTVMD). Residues serine 1488 and serine 1498 each carry the phosphoserine modification. Residues 1531 to 1548 (FLALAVVYFISVLMVSKY) traverse the membrane as a helical segment. The segment covering 1586–1599 (LTTASVEESESTSS) has biased composition (low complexity). Disordered stretches follow at residues 1586–1668 (LTTA…KATP) and 1759–1789 (QASDMGGESPGSRSSNAKLPSVPTVDSVSQD). Position 1605 is a phosphoserine (serine 1605). Residues 1650–1664 (KSPETKNDRGNDLDT) show a composition bias toward basic and acidic residues. 3 positions are modified to phosphoserine: serine 1767, serine 1770, and serine 2064. A compositionally biased stretch (polar residues) spans 1769 to 1789 (GSRSSNAKLPSVPTVDSVSQD). Positions 2073–2181 (NLAGPVSLST…TVKKVVNYLP (109 aa)) constitute a BEACH-type PH domain. The BEACH domain occupies 2200 to 2489 (ASPRQLFKAS…QLLIEPHPPR (290 aa)). Position 2496 is a phosphoserine (serine 2496). WD repeat units follow at residues 2591-2633 (DQSI…LIQV), 2636-2679 (GHWD…SGIG), 2695-2735 (GHDY…RTLE), 2777-2816 (ETDDNIRAIQLSRDGQYLLTGGDRGVVVVRQVSDLKQLFA), and 2819-2858 (GCDAGIRAMALSYDQRCIISGMASGSIVLFYNDFNRWHHE).

Interacts with TOM1 and TOLLIP. As to expression, ubiquitous.

It localises to the cell membrane. The protein resides in the endoplasmic reticulum membrane. Its subcellular location is the golgi apparatus. The protein localises to the trans-Golgi network membrane. It is found in the lysosome membrane. In terms of biological role, involved in coupling signal transduction and vesicle trafficking to enable polarized secretion and/or membrane deposition of immune effector molecules. Involved in phagophore growth during mitophagy by regulating ATG9A trafficking to mitochondria. This is Lipopolysaccharide-responsive and beige-like anchor protein from Homo sapiens (Human).